A 154-amino-acid chain; its full sequence is Large ribosomal subunit protein uL13 (154 aa).

The protein belongs to the universal ribosomal protein uL13 family. Part of the 50S ribosomal subunit.

In terms of biological role, this protein is one of the early assembly proteins of the 50S ribosomal subunit, although it is not seen to bind rRNA by itself. It is important during the early stages of 50S assembly. In Bartonella henselae (strain ATCC 49882 / DSM 28221 / CCUG 30454 / Houston 1) (Rochalimaea henselae), this protein is Large ribosomal subunit protein uL13.